Here is a 271-residue protein sequence, read N- to C-terminus: MTIQDDMVGKHPIENDFWKWLQHEDTESSDLKRHRYLEVDSSNRDEAIKSVAAWLIKYHLSEGKKRVIRKKQEILEKHDFAEYAQSLHVFPKSDKTQKGNLGEIFLSEYLSQTSGVQILVYKLHYNPNIDQSMKGDDVLLVNPDKVLLGESKFRSTPNKRAVEEASELMKDKLTLPMSLGFIADRLFEQGKDELGEVIFDLQFKMSSIEIDIKNIGFLLSTKKVRSIVENNLSSPNSDFIFISLGMDDPAAFLKSVFDYAESNLLEGSYET.

Its function is as follows. Component of antiviral defense system Hachiman, composed of HamA and HamB. Expression of Hachiman in B.subtilis (strain BEST7003) confers resistance to phages phi105, phi29, phi3T, rho14, SBSphiJ, SpBeta and SPR. This chain is Hachiman protein HamA, found in Bacillus cereus.